A 396-amino-acid chain; its full sequence is Elongation factor Tu (396 aa).

Residues 10–206 (KPHVNIGTIG…AVDAYIPEPE (197 aa)) enclose the tr-type G domain. Residues 19–26 (GHVDHGKT) are G1. Residue 19–26 (GHVDHGKT) participates in GTP binding. Residue threonine 26 coordinates Mg(2+). The interval 60 to 64 (GITIS) is G2. Residues 81–84 (DCPG) are G3. Residues 81–85 (DCPGH) and 136–139 (NKVD) contribute to the GTP site. Positions 136–139 (NKVD) are G4. The interval 174–176 (SAL) is G5.

It belongs to the TRAFAC class translation factor GTPase superfamily. Classic translation factor GTPase family. EF-Tu/EF-1A subfamily. In terms of assembly, monomer.

Its subcellular location is the cytoplasm. The catalysed reaction is GTP + H2O = GDP + phosphate + H(+). Its function is as follows. GTP hydrolase that promotes the GTP-dependent binding of aminoacyl-tRNA to the A-site of ribosomes during protein biosynthesis. This is Elongation factor Tu from Magnetococcus marinus (strain ATCC BAA-1437 / JCM 17883 / MC-1).